The sequence spans 429 residues: Small ribosomal subunit protein bS1 (429 aa).

4 consecutive S1 motif domains span residues 55-128, 144-211, 231-299, and 316-385; these read GDVV…LSKK, GDTV…SRKA, GEVV…LSIK, and GSVL…LSMK. Residues 382-399 are compositionally biased toward basic and acidic residues; it reads LSMKALEEKPEREDRRGN. The disordered stretch occupies residues 382–412; the sequence is LSMKALEEKPEREDRRGNDGSASRADIAAYK.

This sequence belongs to the bacterial ribosomal protein bS1 family.

Binds mRNA; thus facilitating recognition of the initiation point. It is needed to translate mRNA with a short Shine-Dalgarno (SD) purine-rich sequence. The polypeptide is Small ribosomal subunit protein bS1 (rps1) (Leuconostoc lactis).